The primary structure comprises 61 residues: Weak toxin CM-1c (61 aa).

4 disulfides stabilise this stretch: Cys3–Cys21, Cys14–Cys37, Cys41–Cys53, and Cys54–Cys59.

It belongs to the three-finger toxin family. Short-chain subfamily. Orphan group VI sub-subfamily. In terms of tissue distribution, expressed by the venom gland.

Its subcellular location is the secreted. This is Weak toxin CM-1c from Hemachatus haemachatus (Rinkhals).